The sequence spans 307 residues: Geranylgeranyl diphosphate synthase (307 aa).

Residues Lys-52, Arg-55, and His-86 each coordinate isopentenyl diphosphate. Mg(2+) is bound by residues Asp-93 and Asp-99. Arg-104 lines the (2E,6E)-farnesyl diphosphate pocket. Arg-105 contributes to the isopentenyl diphosphate binding site. Positions 188, 189, and 226 each coordinate (2E,6E)-farnesyl diphosphate.

It belongs to the FPP/GGPP synthase family. Mg(2+) is required as a cofactor.

The catalysed reaction is isopentenyl diphosphate + (2E,6E)-farnesyl diphosphate = (2E,6E,10E)-geranylgeranyl diphosphate + diphosphate. The protein operates within isoprenoid biosynthesis; geranylgeranyl diphosphate biosynthesis; geranylgeranyl diphosphate from farnesyl diphosphate and isopentenyl diphosphate: step 1/1. Catalyzes the condensation of farnesyl diphosphate (FPP) and isopentenyl diphosphate (IPP) to yield geranylgeranyl diphosphate (GGPP) needed for biosynthesis of carotenoids and diterpenes. This Pseudescherichia vulneris (Escherichia vulneris) protein is Geranylgeranyl diphosphate synthase (crtE).